An 87-amino-acid polypeptide reads, in one-letter code: MGSFSIWHWLIVLLIVVMVFGTKKLKNIGSDLGGAVKGFKDGMKDGSTPEGTPASTTAATPPAGQVTNQQAHAADPGTIDVEAKHKG.

Residues 1–21 traverse the membrane as a helical segment; that stretch reads MGSFSIWHWLIVLLIVVMVFG. Residues 40-87 are disordered; that stretch reads KDGMKDGSTPEGTPASTTAATPPAGQVTNQQAHAADPGTIDVEAKHKG. The span at 46–64 shows a compositional bias: low complexity; that stretch reads GSTPEGTPASTTAATPPAG.

It belongs to the TatA/E family. The Tat system comprises two distinct complexes: a TatABC complex, containing multiple copies of TatA, TatB and TatC subunits, and a separate TatA complex, containing only TatA subunits. Substrates initially bind to the TatABC complex, which probably triggers association of the separate TatA complex to form the active translocon.

It localises to the cell inner membrane. In terms of biological role, part of the twin-arginine translocation (Tat) system that transports large folded proteins containing a characteristic twin-arginine motif in their signal peptide across membranes. TatA could form the protein-conducting channel of the Tat system. In Paracidovorax citrulli (strain AAC00-1) (Acidovorax citrulli), this protein is Sec-independent protein translocase protein TatA.